The following is a 226-amino-acid chain: Isoprenyl transferase (226 aa).

Residue D12 is part of the active site. D12 provides a ligand contact to Mg(2+). Residues 13–16 (GNAR), W17, K25, H29, and 57–59 (SSE) each bind substrate. The active-site Proton acceptor is N60. Substrate contacts are provided by residues W61, R63, R174, and 180–182 (RIS). E193 serves as a coordination point for Mg(2+).

It belongs to the UPP synthase family. In terms of assembly, homodimer. Mg(2+) serves as cofactor.

In terms of biological role, catalyzes the condensation of isopentenyl diphosphate (IPP) with allylic pyrophosphates generating different type of terpenoids. The sequence is that of Isoprenyl transferase from Rickettsia sibirica (strain ATCC VR-151 / 246).